We begin with the raw amino-acid sequence, 224 residues long: UPF0758 protein HEAR2468 (224 aa).

The MPN domain occupies 102–224 (ALNSPQAVKQ…VYSFAEQGQL (123 aa)). Residues His173, His175, and Asp186 each coordinate Zn(2+). The JAMM motif motif lies at 173–186 (HNHPSGTPEPSAAD).

The protein belongs to the UPF0758 family.

The polypeptide is UPF0758 protein HEAR2468 (Herminiimonas arsenicoxydans).